The following is a 427-amino-acid chain: A-kinase anchor protein 5 (427 aa).

The tract at residues 1 to 122 (METTISEIHV…DADLSKKKAK (122 aa)) is disordered. Residues 1–170 (METTISEIHV…LDIQTQTPLN (170 aa)) form an essential to the intracellular anchoring function region. Basic and acidic residues predominate over residues 8–19 (IHVENKDEKRSA). At S22 the chain carries Phosphoserine. A lipid anchor (S-palmitoyl cysteine) is attached at C36. Residues 37 to 48 (FKRRKKAAKALK) are compositionally biased toward basic residues. The AKAP CaM-binding signature appears at 76–96 (RGAWASLKRLVTRRKRSESSK). Basic and acidic residues predominate over residues 92 to 102 (SESSKQQKPLE). C129 is lipidated: S-palmitoyl cysteine. 2 stretches are compositionally biased toward polar residues: residues 171 to 182 (DQATKAKSTQDL) and 242 to 252 (VQPQQASPLET). 3 disordered regions span residues 171-205 (DQAT…STTS), 239-269 (KQDV…PPLP), and 281-333 (SNST…EESK). Over residues 302–333 (EETKPKDTELSQESDFKENGITEEKSKSEESK) the composition is skewed to basic and acidic residues. The PKA-RII subunit binding domain stretch occupies residues 392–405 (LIETASSLVKNAIQ). A tethers NFATC2 to CRAC channels region spans residues 410-427 (QLVNEMASDDNKINNLLQ).

As to quaternary structure, binding protein for dimer of the RII-beta regulatory subunit of cAMP-dependent protein kinase (PKA) and also for the protein kinase C (PKC) and the phosphatase calcineurin (PP2B). Each enzyme is inhibited when bound to the anchoring protein. Also binds the beta2-adrenergic receptor. Part of a complex containing AKAP5, ADCY5, ADCY6 and PDE4C. Interacts with ADCY8, and enhances its phosphorylation at lipid rafts. Interacts with ORAI1 (isoform alpha) (via N-terminus) upon store depletion and in response to LTC4. Does not interact with ORAI2 and ORAI3 paralogs. Interacts (via leucine zipper domain) with NFATC2/NFAT1. Interacts with calmodulin; the interaction is calcium-independent. Interacts with KCNQ2; the interaction may help KCNQ2 channel complex to retain calcium-bound calmodulin. Interacts with KCNK2; the channel is recruited to postsynaptic microdomains by AKAP5 where it can integrate neurotransmitter receptor signals. Part of a complex composed of AKAP5 and ADRB2. Palmitoylated. Palmitoylation at Cys-36 and Cys-129 play a key role in the targeting of AKAP5 to lipid rafts. Palmitoylation by ZDHHC2 is required for AKAP5 function in LTP-stimulated recycling endosome exocytosis. Predominantly in the cerebral cortex and the postsynaptic densities of the forebrain, and to a lesser extent in adrenal medulla, lung and anterior pituitary.

The protein localises to the postsynaptic recycling endosome membrane. It is found in the cell projection. The protein resides in the dendrite. It localises to the postsynaptic cell membrane. In terms of biological role, multivalent scaffold protein that anchors the cAMP-dependent protein kinase/PKA to cytoskeletal and/or organelle-associated proteins, targeting the signal carried by cAMP to specific intracellular effectors. Association with the beta2-adrenergic receptor (beta2-AR) not only regulates beta2-AR signaling pathway, but also the activation by PKA by switching off the beta2-AR signaling cascade. Plays a role in long term synaptic potentiation by regulating protein trafficking from the dendritic recycling endosomes to the plasma membrane and controlling both structural and functional plasticity at excitatory synapses. In hippocampal pyramidal neurons, recruits KCNK2/TREK-1 channel at postsynaptic dense bodies microdomains and converts it to a leak channel no longer sensitive to stimulation by arachidonic acid, acidic pH or mechanical stress, nor inhibited by Gq-coupled receptors but still under the negative control of Gs-coupled receptors. Associates with ORAI1 pore-forming subunit of CRAC channels in Ca(2+) signaling microdomains where it recruits NFATC2/NFAT1 and couples store-operated Ca(2+) influx to calmodulin and calcineurin signaling and activation of NFAT-dependent transcriptional responses. The sequence is that of A-kinase anchor protein 5 (AKAP5) from Homo sapiens (Human).